The chain runs to 243 residues: Small ribosomal subunit protein uS2 (243 aa).

Belongs to the universal ribosomal protein uS2 family.

In Pseudoalteromonas atlantica (strain T6c / ATCC BAA-1087), this protein is Small ribosomal subunit protein uS2.